A 495-amino-acid chain; its full sequence is Rho GTPase-activating protein 19 (495 aa).

A Rho-GAP domain is found at Met98 to Phe304. Disordered regions lie at residues Lys327–Gln362 and Lys393–Leu495. Composition is skewed to basic and acidic residues over residues Ser350–Gln362, Gln433–Val452, and Lys470–Arg481.

Its function is as follows. GTPase activator for the Rho-type GTPases by converting them to an inactive GDP-bound state. The polypeptide is Rho GTPase-activating protein 19 (ARHGAP19) (Gallus gallus (Chicken)).